A 141-amino-acid polypeptide reads, in one-letter code: Flagellar assembly factor FliW (141 aa).

It belongs to the FliW family. As to quaternary structure, interacts with translational regulator CsrA and flagellin(s).

The protein resides in the cytoplasm. Acts as an anti-CsrA protein, binds CsrA and prevents it from repressing translation of its target genes, one of which is flagellin. Binds to flagellin and participates in the assembly of the flagellum. The polypeptide is Flagellar assembly factor FliW (Clostridium beijerinckii (strain ATCC 51743 / NCIMB 8052) (Clostridium acetobutylicum)).